Consider the following 306-residue polypeptide: Pantothenate kinase (306 aa).

Residue 91 to 98 participates in ATP binding; that stretch reads GSVAVGKS.

The protein belongs to the prokaryotic pantothenate kinase family.

The protein resides in the cytoplasm. It carries out the reaction (R)-pantothenate + ATP = (R)-4'-phosphopantothenate + ADP + H(+). It participates in cofactor biosynthesis; coenzyme A biosynthesis; CoA from (R)-pantothenate: step 1/5. This chain is Pantothenate kinase (coaA), found in Streptococcus pyogenes serotype M1.